Consider the following 391-residue polypeptide: ATP phosphoribosyltransferase regulatory subunit (391 aa).

The protein belongs to the class-II aminoacyl-tRNA synthetase family. HisZ subfamily. In terms of assembly, heteromultimer composed of HisG and HisZ subunits.

The protein localises to the cytoplasm. It participates in amino-acid biosynthesis; L-histidine biosynthesis; L-histidine from 5-phospho-alpha-D-ribose 1-diphosphate: step 1/9. Required for the first step of histidine biosynthesis. May allow the feedback regulation of ATP phosphoribosyltransferase activity by histidine. This Prochlorococcus marinus (strain NATL2A) protein is ATP phosphoribosyltransferase regulatory subunit.